The chain runs to 559 residues: S-layer protein (559 aa).

The first 28 residues, 1-28, serve as a signal peptide directing secretion; the sequence is MAMSLKKIGAIAVGGAMVASALASGVMA. Asn-108, Asn-130, Asn-155, Asn-222, and Asn-373 each carry an N-linked (GlcNAc...) asparagine glycan.

The protein belongs to the Mj S-layer protein family.

It localises to the secreted. The protein localises to the cell wall. It is found in the S-layer. S-layer protein. The S-layer is a paracrystalline mono-layered assembly of proteins which coat the surface of the cell. This is S-layer protein from Methanothermococcus thermolithotrophicus (Methanococcus thermolithotrophicus).